Consider the following 196-residue polypeptide: SAGA-associated factor 11 homolog (196 aa).

The SGF11-type zinc finger occupies 102-123 (CTCPNCDRLVAAARFAPHLEKC). The segment at 140-196 (TKEGTSASSNSSYVHSGANAGGTDDEDDVDWSSDKRKKKSTQNSRNNGSKKNNGKTF) is disordered. Over residues 142-153 (EGTSASSNSSYV) the composition is skewed to polar residues. Position 172 is a phosphoserine (serine 172). The span at 182–196 (NSRNNGSKKNNGKTF) shows a compositional bias: low complexity.

Belongs to the SGF11 family. Component of some SAGA transcription coactivator-HAT complexes, at least composed of Ada2b, not/nonstop, Pcaf/Gcn5, Sgf11 and Spt3. Within the SAGA complex, Sgf11, e(y)2, and not/nonstop form an additional subcomplex of SAGA called the DUB module (deubiquitination module). Interacts directly with not/nonstop. Interacts with the AMEX complex component xmas-2. Interacts with Cbp80; important for promoter recruitment of Sgf11 that is not associated with the DUB module.

Its subcellular location is the nucleus. The protein resides in the nucleoplasm. It localises to the cytoplasm. Functionally, component of the transcription regulatory histone acetylation (HAT) complex SAGA, a multiprotein complex that activates transcription by remodeling chromatin and mediating histone acetylation and deubiquitination. Within the SAGA complex, participates in a subcomplex that specifically deubiquitinates histone H2B. The SAGA complex is recruited to specific gene promoters by activators, where it is required for transcription. Required for nuclear receptor-mediated transactivation. Binds independently on SAGA to promoters in an RNA-dependent manner. Binds to mRNA and is essential for total mRNA export from the nucleus. Required to counteract heterochromatin silencing. Controls the development of neuronal connectivity in visual system by being required for accurate axon targeting in the optic lobe. Required for expression of ecdysone-induced genes such as br/broad. This chain is SAGA-associated factor 11 homolog, found in Drosophila persimilis (Fruit fly).